Consider the following 250-residue polypeptide: NAD-dependent protein deacetylase (250 aa).

Residues 1–244 enclose the Deacetylase sirtuin-type domain; sequence MECDKVGDLL…PCVVDYIKSQ (244 aa). Ala22, Thr26, Phe33, Arg34, Gln98, Ile100, Asp101, and His116 together coordinate NAD(+). Position 33 (Phe33) interacts with nicotinamide. The nicotinamide site is built by Ile100 and Asp101. Catalysis depends on His116, which acts as the Proton acceptor. Residues Cys124, Cys127, Cys149, and Cys151 each coordinate Zn(2+). 4 residues coordinate NAD(+): Ser187, Ser188, Asn212, and Val230.

The protein belongs to the sirtuin family. Class U subfamily. Requires Zn(2+) as cofactor.

Its subcellular location is the cytoplasm. It carries out the reaction N(6)-acetyl-L-lysyl-[protein] + NAD(+) + H2O = 2''-O-acetyl-ADP-D-ribose + nicotinamide + L-lysyl-[protein]. Its function is as follows. NAD-dependent protein deacetylase which modulates the activities of several enzymes which are inactive in their acetylated form. Deacetylates the N-terminal lysine residue of Alba, the major archaeal chromatin protein and that, in turn, increases Alba's DNA binding affinity, thereby repressing transcription. The sequence is that of NAD-dependent protein deacetylase from Sulfurisphaera tokodaii (strain DSM 16993 / JCM 10545 / NBRC 100140 / 7) (Sulfolobus tokodaii).